A 392-amino-acid polypeptide reads, in one-letter code: 8-amino-7-oxononanoate synthase (392 aa).

Arg21 provides a ligand contact to substrate. Residue 108–109 coordinates pyridoxal 5'-phosphate; that stretch reads GF. His133 serves as a coordination point for substrate. Pyridoxal 5'-phosphate-binding positions include Ser181, 206–209, and 237–240; these read DDAH and TLSK. An N6-(pyridoxal phosphate)lysine modification is found at Lys240. Substrate is bound at residue Thr354.

This sequence belongs to the class-II pyridoxal-phosphate-dependent aminotransferase family. BioF subfamily. Homodimer. Requires pyridoxal 5'-phosphate as cofactor.

The catalysed reaction is 6-carboxyhexanoyl-[ACP] + L-alanine + H(+) = (8S)-8-amino-7-oxononanoate + holo-[ACP] + CO2. The protein operates within cofactor biosynthesis; biotin biosynthesis. Catalyzes the decarboxylative condensation of pimeloyl-[acyl-carrier protein] and L-alanine to produce 8-amino-7-oxononanoate (AON), [acyl-carrier protein], and carbon dioxide. This Symbiobacterium thermophilum (strain DSM 24528 / JCM 14929 / IAM 14863 / T) protein is 8-amino-7-oxononanoate synthase.